Reading from the N-terminus, the 874-residue chain is MKTTSEIRQSFLDFFNSKGHTVVPSSALVPENDPTLLFTNAGMNQFKDVFLGLEKRPYTRATTAQRCVRAGGKHNDLENVGYTARHHTFFEMMGNFSFGDYFKHDAIQFAWEFLTSEKWLHLPKEKLYVTVYETDDEAYDIWHKTVGVPSEHIIRIGDNKGVPYASDNFWAMGDTGPCGPCTEIFYDHGESFWGGLPGTAEEDGDRYIEVWNIVFMQFNRQADGTLAKLPKPSVDTGMGLERMTAVMQHVNSNYETDIFQTLIKEVATLLHVADLDNKSLRVIADHIRACSYLIVDGVIPSNEGRGYVLRRIIRRAVRHGNLLGAKEAFFYKLVPTLAKVMGQAGEILTDKQSYIQKTLKTEEEQFARTLERGLALLEEALTKVENQTLSGEVAFKLYDTYGFPLDLTADVCRERDIVIDEASFEIEMTAQRERAKSSSNFGADYNSVIKVEAETAFIGYDCFNAEAKVIALFSNGQAVDKVQSGESAVVVLDKTPFYAEMGGQVGDSGLITTAFCQFAVADTQKYGQVFGHIGQVVSGSLAIGDIISAQVDIARRQAITANHSATHLLHSALRQVLGEHVVQKGSLVSENVLRFDFSQSQAVSKAQLEEIERIVNRQIRQNLAVTIETMDIETAKEKGTVALFGEKYGDVVRVVGMTDFSIELCGGTHVKHTGEIGLFKLISESAVAAGIRRVEALTAENAINWLHNQQKIIHQSAELLKTDSLSLVDKIYQLQDKIKRNEKELQHFKDKLAAQAGAELAKQVVQINGINVVIQKLEGIESKSLRTMVDDLKNQLSSVIVVFGSVSADKVNLIVGVTKDLSNKVNAGELVGLIAQQVGGKGGGRPDMAMAGGTEPQHLDTALAFAKQWIHSKL.

Positions 563, 567, 665, and 669 each coordinate Zn(2+).

The protein belongs to the class-II aminoacyl-tRNA synthetase family. Requires Zn(2+) as cofactor.

It is found in the cytoplasm. It carries out the reaction tRNA(Ala) + L-alanine + ATP = L-alanyl-tRNA(Ala) + AMP + diphosphate. In terms of biological role, catalyzes the attachment of alanine to tRNA(Ala) in a two-step reaction: alanine is first activated by ATP to form Ala-AMP and then transferred to the acceptor end of tRNA(Ala). Also edits incorrectly charged Ser-tRNA(Ala) and Gly-tRNA(Ala) via its editing domain. In Haemophilus ducreyi (strain 35000HP / ATCC 700724), this protein is Alanine--tRNA ligase.